A 394-amino-acid polypeptide reads, in one-letter code: Lipid-A-disaccharide synthase (394 aa).

Belongs to the LpxB family.

The catalysed reaction is 2-N,3-O-bis[(3R)-3-hydroxytetradecanoyl]-alpha-D-glucosaminyl 1-phosphate + UDP-2-N,3-O-bis[(3R)-3-hydroxytetradecanoyl]-alpha-D-glucosamine = lipid A disaccharide (E. coli) + UDP + H(+). The enzyme catalyses a lipid X + a UDP-2-N,3-O-bis[(3R)-3-hydroxyacyl]-alpha-D-glucosamine = a lipid A disaccharide + UDP + H(+). It participates in glycolipid biosynthesis; lipid IV(A) biosynthesis; lipid IV(A) from (3R)-3-hydroxytetradecanoyl-[acyl-carrier-protein] and UDP-N-acetyl-alpha-D-glucosamine: step 5/6. Functionally, condensation of UDP-2,3-diacylglucosamine and 2,3-diacylglucosamine-1-phosphate to form lipid A disaccharide, a precursor of lipid A, a phosphorylated glycolipid that anchors the lipopolysaccharide to the outer membrane of the cell. This chain is Lipid-A-disaccharide synthase, found in Yersinia pestis.